The sequence spans 508 residues: Maturase K (508 aa).

The protein belongs to the intron maturase 2 family. MatK subfamily.

Its subcellular location is the plastid. It is found in the chloroplast. Functionally, usually encoded in the trnK tRNA gene intron. Probably assists in splicing its own and other chloroplast group II introns. In Verbena rigida (Tuberous vervain), this protein is Maturase K.